A 223-amino-acid chain; its full sequence is tRNA (guanine-N(7)-)-methyltransferase (223 aa).

Glu-45, Glu-70, and Asp-125 together coordinate S-adenosyl-L-methionine. Asp-125 is an active-site residue. Substrate is bound by residues Lys-129, Asp-161, and Thr-201–Glu-204.

This sequence belongs to the class I-like SAM-binding methyltransferase superfamily. TrmB family.

It catalyses the reaction guanosine(46) in tRNA + S-adenosyl-L-methionine = N(7)-methylguanosine(46) in tRNA + S-adenosyl-L-homocysteine. The protein operates within tRNA modification; N(7)-methylguanine-tRNA biosynthesis. In terms of biological role, catalyzes the formation of N(7)-methylguanine at position 46 (m7G46) in tRNA. This Mesoplasma florum (strain ATCC 33453 / NBRC 100688 / NCTC 11704 / L1) (Acholeplasma florum) protein is tRNA (guanine-N(7)-)-methyltransferase.